The following is a 2238-amino-acid chain: Protein Ycf2 (2238 aa).

Position 1579 to 1586 (1579 to 1586) interacts with ATP; the sequence is GSIGTGRS.

It belongs to the Ycf2 family.

The protein resides in the plastid. In terms of biological role, probable ATPase of unknown function. Its presence in a non-photosynthetic plant (Epifagus virginiana) and experiments in tobacco indicate that it has an essential function which is probably not related to photosynthesis. The protein is Protein Ycf2 of Cuscuta exaltata (Tall dodder).